Consider the following 307-residue polypeptide: Chaperone protein DnaJ 2 (307 aa).

The region spanning 6 to 71 (NYYQILGVPR…TKRRELDSRL (66 aa)) is the J domain. Residues 69-133 (SRLFGRFRRP…TRRTKVVSPA (65 aa)) are disordered. Residues 88–99 (NGGRSPNGTSVN) show a composition bias toward polar residues. Residues 100 to 114 (GQVRTPTGRTGTRQP) show a composition bias toward low complexity.

It belongs to the DnaJ family. Homodimer. Requires Zn(2+) as cofactor.

It is found in the cytoplasm. Participates actively in the response to hyperosmotic and heat shock by preventing the aggregation of stress-denatured proteins and by disaggregating proteins, also in an autonomous, DnaK-independent fashion. Unfolded proteins bind initially to DnaJ; upon interaction with the DnaJ-bound protein, DnaK hydrolyzes its bound ATP, resulting in the formation of a stable complex. GrpE releases ADP from DnaK; ATP binding to DnaK triggers the release of the substrate protein, thus completing the reaction cycle. Several rounds of ATP-dependent interactions between DnaJ, DnaK and GrpE are required for fully efficient folding. Also involved, together with DnaK and GrpE, in the DNA replication of plasmids through activation of initiation proteins. The protein is Chaperone protein DnaJ 2 (dnaJ2) of Synechocystis sp. (strain ATCC 27184 / PCC 6803 / Kazusa).